The following is a 430-amino-acid chain: Sesquiterpene synthase Agr5 (430 aa).

An N-terminal signal peptide occupies residues 1 to 25 (MASSLLEPSLAAIALVILLASVSLS). N113 carries N-linked (GlcNAc...) asparagine glycosylation. Residues D176, N311, S315, and E319 each contribute to the Mg(2+) site. The DDXXD motif motif lies at 176–180 (DEYTD). (2E,6E)-farnesyl diphosphate is bound by residues R401 and Y402.

The protein belongs to the terpene synthase family. Requires Mg(2+) as cofactor.

The enzyme catalyses (2E,6E)-farnesyl diphosphate = viridiflorene + diphosphate. Functionally, terpene cyclase that catalyzes the cyclization of farnesyl diphosphate (FPP) to viridiflorene and viridiflorol. In Cyclocybe aegerita (Black poplar mushroom), this protein is Sesquiterpene synthase Agr5.